Reading from the N-terminus, the 328-residue chain is Renalase (328 aa).

FAD contacts are provided by residues Ala13, 32–33 (DK), Arg40, and 56–57 (QY). Substrate is bound by residues 57–61 (YFTAR) and 96–98 (SPD). Residue Ile128 coordinates FAD. Thr185 is a binding site for substrate. Asp302 contacts FAD. Arg308 is a binding site for substrate. Val309 contacts FAD.

It belongs to the bacterial renalase family. FAD is required as a cofactor.

The catalysed reaction is 1,2-dihydro-beta-NAD + O2 + H(+) = H2O2 + NAD(+). The enzyme catalyses 1,2-dihydro-beta-NADP + O2 + H(+) = H2O2 + NADP(+). It carries out the reaction 1,6-dihydro-beta-NADP + O2 + H(+) = H2O2 + NADP(+). It catalyses the reaction 1,6-dihydro-beta-NAD + O2 + H(+) = H2O2 + NAD(+). Functionally, catalyzes the oxidation of the 1,2-dihydro- and 1,6-dihydro- isomeric forms of beta-NAD(P) back to beta-NAD(P)+. Has a preference for 1,2-dihydro-beta-NAD as substrate. May serve to protect primary metabolism dehydrogenases from inhibition by the 1,2-dihydro- and 1,6-dihydro-beta-NAD(P) isomers. The protein is Renalase of Pseudomonas savastanoi pv. phaseolicola (strain 1448A / Race 6) (Pseudomonas syringae pv. phaseolicola (strain 1448A / Race 6)).